Here is a 182-residue protein sequence, read N- to C-terminus: Probable peptidyl-prolyl cis-trans isomerase A (182 aa).

A PPIase cyclophilin-type domain is found at 13–181 (QNATATLHTN…EPVVIDSITI (169 aa)). A disordered region spans residues 161–182 (TTATDGNDRPTEPVVIDSITIS).

Belongs to the cyclophilin-type PPIase family.

It is found in the cytoplasm. It carries out the reaction [protein]-peptidylproline (omega=180) = [protein]-peptidylproline (omega=0). Functionally, PPIases accelerate the folding of proteins. It catalyzes the cis-trans isomerization of proline imidic peptide bonds in oligopeptides. This Mycobacterium leprae (strain TN) protein is Probable peptidyl-prolyl cis-trans isomerase A (ppiA).